We begin with the raw amino-acid sequence, 440 residues long: MRNYRGSKVVIIGLGITGLSCVNFFLDRGVIPKVIDTRIYPPGIKKIPHVVQCYLGAFNDIWLLSATLIVVSPGVRLDHPVLIEALKLGIEIIGDIELFTREATAPIIAITGSNGKSTVTQLVSRMARIAGWHVGVAGNIGVPVLSLLNKSYQLYILEISSFQLDTTYSLRAIAAAILNVSEDHMDHYPGGLKQYWFSKQRIYKNAKICVMNALDFLTIPIYHEYDYCISFGENEDSADYYLKYYKGHTWIVAYNEYVLNCSEMRINNRINYINALSALALSDIIKIPRSVSLKVLCQFSGLAHRCQLIYKNHGVSWINDSKATNVSATKEAINNLKLCGTLHLILGGDGKLADFSSLKHLIKQHEIHLYCFGKDGLLLTTLGFSDVILTNTMIQAMRIINRRIKAKDIVLLSPACSSLDQFKSFEMRGLIFTCFAREFR.

112 to 118 (GSNGKST) provides a ligand contact to ATP.

This sequence belongs to the MurCDEF family.

It localises to the cytoplasm. It carries out the reaction UDP-N-acetyl-alpha-D-muramoyl-L-alanine + D-glutamate + ATP = UDP-N-acetyl-alpha-D-muramoyl-L-alanyl-D-glutamate + ADP + phosphate + H(+). The protein operates within cell wall biogenesis; peptidoglycan biosynthesis. Cell wall formation. Catalyzes the addition of glutamate to the nucleotide precursor UDP-N-acetylmuramoyl-L-alanine (UMA). This Blochmanniella pennsylvanica (strain BPEN) protein is UDP-N-acetylmuramoylalanine--D-glutamate ligase.